The chain runs to 183 residues: ER membrane protein complex subunit 4 (183 aa).

Threonine 2 bears the N-acetylthreonine mark. Residues 2 to 66 (TAQGGLVANR…VQETDRILVE (65 aa)) are Cytoplasmic-facing. Residues 20–39 (ELSGPGGGSRGRSDRGSGQG) are disordered. Serine 36 is modified (phosphoserine). The helical transmembrane segment at 67 to 87 (KRCWDIALGPLKQIPMNLFIM) threads the bilayer. The Lumenal segment spans residues 88-98 (YMAGNTISIFP). Residues 99–120 (TMMVCMMAWRPIQALMAISATF) form a helical membrane-spanning segment. Over 121 to 127 (KMLESSS) the chain is Cytoplasmic. Residues 128–148 (QKFLQGLVYLIGNLMGLALAV) traverse the membrane as a helical segment. Topologically, residues 149-183 (YKCQSMGLLPTHASDWLAFIEPPERMEFSGGGLLL) are lumenal.

The protein belongs to the EMC4 family. Component of the ER membrane protein complex (EMC). In terms of tissue distribution, isoform 1 is expressed in brain and heart. Isoform 2 is expressed in heart.

It is found in the endoplasmic reticulum membrane. Functionally, part of the endoplasmic reticulum membrane protein complex (EMC) that enables the energy-independent insertion into endoplasmic reticulum membranes of newly synthesized membrane proteins. Preferentially accommodates proteins with transmembrane domains that are weakly hydrophobic or contain destabilizing features such as charged and aromatic residues. Involved in the cotranslational insertion of multi-pass membrane proteins in which stop-transfer membrane-anchor sequences become ER membrane spanning helices. It is also required for the post-translational insertion of tail-anchored/TA proteins in endoplasmic reticulum membranes. By mediating the proper cotranslational insertion of N-terminal transmembrane domains in an N-exo topology, with translocated N-terminus in the lumen of the ER, controls the topology of multi-pass membrane proteins like the G protein-coupled receptors. By regulating the insertion of various proteins in membranes, it is indirectly involved in many cellular processes. The protein is ER membrane protein complex subunit 4 (EMC4) of Homo sapiens (Human).